Here is a 159-residue protein sequence, read N- to C-terminus: Urease subunit beta 2 (159 aa).

The segment at 1–23 (MAKEPTEAAHPQPEQTKTNHKAH) is disordered.

This sequence belongs to the urease beta subunit family. In terms of assembly, heterotrimer of UreA (gamma), UreB (beta) and UreC (alpha) subunits. Three heterotrimers associate to form the active enzyme.

The protein localises to the cytoplasm. It carries out the reaction urea + 2 H2O + H(+) = hydrogencarbonate + 2 NH4(+). The protein operates within nitrogen metabolism; urea degradation; CO(2) and NH(3) from urea (urease route): step 1/1. In Brucella abortus biovar 1 (strain 9-941), this protein is Urease subunit beta 2.